A 199-amino-acid chain; its full sequence is 3-isopropylmalate dehydratase small subunit (199 aa).

This sequence belongs to the LeuD family. LeuD type 1 subfamily. As to quaternary structure, heterodimer of LeuC and LeuD.

It catalyses the reaction (2R,3S)-3-isopropylmalate = (2S)-2-isopropylmalate. It participates in amino-acid biosynthesis; L-leucine biosynthesis; L-leucine from 3-methyl-2-oxobutanoate: step 2/4. Functionally, catalyzes the isomerization between 2-isopropylmalate and 3-isopropylmalate, via the formation of 2-isopropylmaleate. This is 3-isopropylmalate dehydratase small subunit from Aeromonas hydrophila subsp. hydrophila (strain ATCC 7966 / DSM 30187 / BCRC 13018 / CCUG 14551 / JCM 1027 / KCTC 2358 / NCIMB 9240 / NCTC 8049).